The primary structure comprises 402 residues: LIM homeobox transcription factor 1-beta (402 aa).

2 consecutive LIM zinc-binding domains span residues 56-106 and 115-168; these read CEGC…CKQD and CSGC…CKGD. Disordered stretches follow at residues 176 to 229 and 326 to 346; these read LSSV…LTTQ and PYGSSDPFQQGLTPPQMPGDH. The segment at residues 219-278 is a DNA-binding region (homeobox); it reads PKRPRTILTTQQRRAFKASFEVSSKPCRKVRETLAAETGLSVRVVQVWFQNQRAKMKKLA. Residues 326–338 show a composition bias toward polar residues; sequence PYGSSDPFQQGLT.

In terms of assembly, interacts with DHX9. In terms of tissue distribution, expressed in most tissues. Highest levels in testis, thyroid, duodenum, skeletal muscle, and pancreatic islets.

The protein localises to the nucleus. Functionally, transcription factor involved in the regulation of podocyte-expressed genes. Essential for the specification of dorsal limb fate at both the zeugopodal and autopodal levels. The polypeptide is LIM homeobox transcription factor 1-beta (LMX1B) (Homo sapiens (Human)).